The primary structure comprises 509 residues: Group 3 secretory phospholipase A2 (509 aa).

Residues 1–19 (MGVQAGLFGMLGFLGVALG) form the signal peptide. The segment at 123–149 (ESPAGARKKRAAGQSGVPGGGHQREKR) is disordered. The phospholipase A2-like stretch occupies residues 150 to 291 (GWTMPGTLWC…SWSSRATSPT (142 aa)). Residues Trp158, Gly160, and Gly162 each coordinate Ca(2+). Cystine bridges form between Cys159/Cys181, Cys180/Cys220, Cys187/Cys213, and Cys211/Cys244. N-linked (GlcNAc...) asparagine glycosylation is present at Asn167. Residue His184 is part of the active site. Asp185 contributes to the Ca(2+) binding site. Asp214 is an active-site residue. Asn280 is a glycosylation site (N-linked (GlcNAc...) asparagine). Positions 283-354 (WSSRATSPTP…LQGPQGGLKP (72 aa)) are disordered. Low complexity predominate over residues 284-296 (SSRATSPTPSSRS). Residues 302–322 (PRQKQHLRKGPPHQKGSKRPS) are compositionally biased toward basic residues. N-linked (GlcNAc...) asparagine glycosylation is found at Asn325, Asn396, and Asn439. Residues 458–482 (QQRRHQLQDKGTDERQPWPSEPLRG) form a disordered region. Positions 463 to 473 (QLQDKGTDERQ) are enriched in basic and acidic residues.

Belongs to the phospholipase A2 family. Ca(2+) serves as cofactor. In terms of processing, N-glycosylation does not affect the catalytic activity, but is required for proper secretion. A nonglycosylated form is observed in several cell types. In several cell types, the N- and C-termini are cleaved off. Expressed in kidney, heart, liver, and skeletal muscle. Also present in placenta and peripheral blood leukocytes. Not detected in colon, thymus, spleen and small intestine. In lung, expressed in bronchial epithelial cells and alveolar macrophages, but scarcely detected in alveolar epithelium, arterial walls and interstitial fibroblasts (at protein level). In joints of osteoarthritis and rheumatoid arthritis, expressed in endothelial cells (at protein level). In normal heart, detected in some vessels. In myocardial tissues with acute infarction, expressed in vascular endothelial cells adjacent to cardiomyocytes and those in lesions with granulation. Expression in cardiomyocytes is scarce (at protein level). In uterus, breast and colon cancers, detected in tumor cells and neighboring microvascular endothelium, but not in normal glandular tissues (at protein level). Expressed in dermal resting mast cells (at protein level) and pulmonary mast cells. Expressed in neuronal fibers (at protein level). Highly expressed in dorsal root ganglia neurons (at protein level). Expressed in Purkinje cells in cerebellum (at protein level). In stomach is preferentially expressed in neuronal fibers and in microvascular endothelium. Sparsely expressed in normal aorta (at protein level). Highly expressed in macrophages and smooth muscle cells in aorta with atheroma.

Its subcellular location is the secreted. The protein resides in the cell membrane. The protein localises to the cytoplasm. It localises to the cytoskeleton. It is found in the microtubule organizing center. Its subcellular location is the centrosome. The protein resides in the centriole. The protein localises to the recycling endosome. It catalyses the reaction a 1,2-diacyl-sn-glycero-3-phosphocholine + H2O = a 1-acyl-sn-glycero-3-phosphocholine + a fatty acid + H(+). It carries out the reaction 1-hexadecanoyl-2-(9Z,12Z-octadecadienoyl)-sn-glycero-3-phosphocholine + H2O = (9Z,12Z)-octadecadienoate + 1-hexadecanoyl-sn-glycero-3-phosphocholine + H(+). The catalysed reaction is 1-hexadecanoyl-2-(5Z,8Z,11Z,14Z-eicosatetraenoyl)-sn-glycero-3-phosphocholine + H2O = 1-hexadecanoyl-sn-glycero-3-phosphocholine + (5Z,8Z,11Z,14Z)-eicosatetraenoate + H(+). The enzyme catalyses 1-hexadecanoyl-2-(9Z,12Z-octadecadienoyl)-sn-glycero-3-phosphoethanolamine + H2O = 1-hexadecanoyl-sn-glycero-3-phosphoethanolamine + (9Z,12Z)-octadecadienoate + H(+). It catalyses the reaction 1-hexadecanoyl-2-(5Z,8Z,11Z,14Z-eicosatetraenoyl)-sn-glycero-3-phosphoethanolamine + H2O = 1-hexadecanoyl-sn-glycero-3-phosphoethanolamine + (5Z,8Z,11Z,14Z)-eicosatetraenoate + H(+). Arachidonic acid release is markedly increased by glypican, a glycosylphosphatidylinositol-anchored heparan sulfate proteoglycan. Its function is as follows. Secretory calcium-dependent phospholipase A2 that primarily targets extracellular phospholipids. Hydrolyzes the ester bond of the fatty acyl group attached at sn-2 position of phospholipids without apparent head group selectivity. Contributes to phospholipid remodeling of low-density lipoprotein (LDL) and high-density lipoprotein (HDL) particles. Hydrolyzes LDL phospholipids releasing unsaturated fatty acids that regulate macrophage differentiation toward foam cells. May act in an autocrine and paracrine manner. Secreted by immature mast cells, acts on nearby fibroblasts upstream to PTDGS to synthesize prostaglandin D2 (PGD2), which in turn promotes mast cell maturation and degranulation via PTGDR. Secreted by epididymal epithelium, acts on immature sperm cells within the duct, modulating the degree of unsaturation of the fatty acyl components of phosphatidylcholines required for acrosome assembly and sperm cell motility. Facilitates the replacement of fatty acyl chains in phosphatidylcholines in sperm membranes from omega-6 and omega-9 to omega-3 polyunsaturated fatty acids (PUFAs). Coupled to lipoxygenase pathway, may process omega-6 PUFAs to generate oxygenated lipid mediators in the male reproductive tract. At pericentrosomal preciliary compartment, negatively regulates ciliogenesis likely by regulating endocytotic recycling of ciliary membrane protein. Coupled to cyclooxygenase pathway provides arachidonate to generate prostaglandin E2 (PGE2), a potent immunomodulatory lipid in inflammation and tumorigenesis. At colonic epithelial barrier, preferentially hydrolyzes phospholipids having arachidonate and docosahexaenoate at sn-2 position, contributing to the generation of oxygenated metabolites involved in colonic stem cell homeostasis. Releases C16:0 and C18:0 lysophosphatidylcholine subclasses from neuron plasma membranes and promotes neurite outgrowth and neuron survival. The sequence is that of Group 3 secretory phospholipase A2 from Homo sapiens (Human).